A 278-amino-acid chain; its full sequence is Phosphatidylglycerol--prolipoprotein diacylglyceryl transferase (278 aa).

3 helical membrane passes run 21–41 (WYGIIIAMGILLGYFIAQASV), 54–74 (IIFWSAIFGFIIARIYFVIFQ), and 88–108 (IWQGGIAIHGGLIGGFVTGII). An a 1,2-diacyl-sn-glycero-3-phospho-(1'-sn-glycerol)-binding site is contributed by R136. The next 3 membrane-spanning stretches (helical) occupy residues 176 to 196 (QPTFLYESIWDVLGFVILILL), 202 to 222 (IGDTFCLYLIWYSIGRFFVEG), and 234 to 254 (IRIAQLMSIILIIIGVVIMIV).

The protein belongs to the Lgt family.

The protein localises to the cell membrane. The catalysed reaction is L-cysteinyl-[prolipoprotein] + a 1,2-diacyl-sn-glycero-3-phospho-(1'-sn-glycerol) = an S-1,2-diacyl-sn-glyceryl-L-cysteinyl-[prolipoprotein] + sn-glycerol 1-phosphate + H(+). It functions in the pathway protein modification; lipoprotein biosynthesis (diacylglyceryl transfer). In terms of biological role, catalyzes the transfer of the diacylglyceryl group from phosphatidylglycerol to the sulfhydryl group of the N-terminal cysteine of a prolipoprotein, the first step in the formation of mature lipoproteins. This chain is Phosphatidylglycerol--prolipoprotein diacylglyceryl transferase, found in Staphylococcus saprophyticus subsp. saprophyticus (strain ATCC 15305 / DSM 20229 / NCIMB 8711 / NCTC 7292 / S-41).